We begin with the raw amino-acid sequence, 547 residues long: G protein-coupled receptor associated sorting protein 3 (547 aa).

Residues Met1–Ala10 show a composition bias toward basic residues. 2 disordered regions span residues Met1–Gly32 and Thr80–Lys102.

It belongs to the GPRASP family. In terms of assembly, homodimer. In terms of tissue distribution, highly expressed in brain. Not expressed in lung or liver. Down-regulated in brain from patients suffering from Alzheimer disease.

Its subcellular location is the cytoplasm. It is found in the nucleus. Survival and differentiation promoting protein that plays a role in the regulation of neurosynaptogenesis. Induces phosphatase PP2A activity which results in APP dephosphorylation and inhibits BACE1-mediated processing of APP. This Homo sapiens (Human) protein is G protein-coupled receptor associated sorting protein 3.